Consider the following 206-residue polypeptide: Thymidylate kinase (206 aa).

ATP is bound at residue 10–17; sequence GVDGVGKT.

This sequence belongs to the thymidylate kinase family.

It catalyses the reaction dTMP + ATP = dTDP + ADP. In terms of biological role, phosphorylation of dTMP to form dTDP in both de novo and salvage pathways of dTTP synthesis. This chain is Thymidylate kinase, found in Bifidobacterium longum (strain NCC 2705).